The sequence spans 48 residues: U1-theraphotoxin-Agm1a (48 aa).

Disulfide bonds link C4–C34, C8–C40, and C22–C45. At M44 the chain carries Methionine sulfoxide; partial.

Belongs to the neurotoxin 12 (Hwtx-2) family. 01 (Ap1a) subfamily. As to expression, expressed by the venom gland.

The protein resides in the secreted. Its function is as follows. Is toxic to both insects and mammals. Induces reversible paralysis when injected into S.frugiperda larvae. Reduces both the amplitude and frequency of responses from muscle (GF-TTM and GF-DLM) pathways in the D.melanogaster giant fiber circuit, suggesting an action at the neuromuscular junction, which is mediated by glutamatergic receptors. In mice, intracranial injection of 30 ug causes increased urination, myoclonus, hypermotility with circular movements followed by respiratory and generalized seizures resulting in death within 25-35 minutes of injection. In Acanthoscurria gomesiana (Tarantula spider), this protein is U1-theraphotoxin-Agm1a.